Here is a 31-residue protein sequence, read N- to C-terminus: Photosystem II reaction center protein T (31 aa).

A helical membrane pass occupies residues 3–23; sequence SFAYILILTLAIATLFFAIAF.

It belongs to the PsbT family. PSII is composed of 1 copy each of membrane proteins PsbA, PsbB, PsbC, PsbD, PsbE, PsbF, PsbH, PsbI, PsbJ, PsbK, PsbL, PsbM, PsbT, PsbX, PsbY, PsbZ, Psb30/Ycf12, peripheral proteins PsbO, CyanoQ (PsbQ), PsbU, PsbV and a large number of cofactors. It forms dimeric complexes.

Its subcellular location is the cellular thylakoid membrane. In terms of biological role, found at the monomer-monomer interface of the photosystem II (PS II) dimer, plays a role in assembly and dimerization of PSII. PSII is a light-driven water plastoquinone oxidoreductase, using light energy to abstract electrons from H(2)O, generating a proton gradient subsequently used for ATP formation. The polypeptide is Photosystem II reaction center protein T (Synechococcus sp. (strain WH7803)).